The chain runs to 476 residues: tRNA-2-methylthio-N(6)-dimethylallyladenosine synthase (476 aa).

The span at 1–14 (MTEVVHLHMPEEAR) shows a compositional bias: basic and acidic residues. A disordered region spans residues 1 to 20 (MTEVVHLHMPEEARATQSRD). The MTTase N-terminal domain maps to 26–147 (RRYYVWTVGC…APNPIYQLEE (122 aa)). Residues C35, C71, C105, C170, C174, and C177 each contribute to the [4Fe-4S] cluster site. The Radical SAM core domain occupies 156-390 (DHPPVSVHVP…ERLQEQIAAE (235 aa)). The TRAM domain maps to 393 to 453 (ARFLHQTVEV…PWSLQGVLAR (61 aa)).

The protein belongs to the methylthiotransferase family. MiaB subfamily. As to quaternary structure, monomer. Requires [4Fe-4S] cluster as cofactor.

The protein localises to the cytoplasm. It catalyses the reaction N(6)-dimethylallyladenosine(37) in tRNA + (sulfur carrier)-SH + AH2 + 2 S-adenosyl-L-methionine = 2-methylsulfanyl-N(6)-dimethylallyladenosine(37) in tRNA + (sulfur carrier)-H + 5'-deoxyadenosine + L-methionine + A + S-adenosyl-L-homocysteine + 2 H(+). In terms of biological role, catalyzes the methylthiolation of N6-(dimethylallyl)adenosine (i(6)A), leading to the formation of 2-methylthio-N6-(dimethylallyl)adenosine (ms(2)i(6)A) at position 37 in tRNAs that read codons beginning with uridine. This is tRNA-2-methylthio-N(6)-dimethylallyladenosine synthase from Roseiflexus sp. (strain RS-1).